A 361-amino-acid polypeptide reads, in one-letter code: MTTYFNYPSKELQDELREIAQKIVAPGKGILAADESGPTMGKRLQDIGVENTEDNRRAYRQLLFSTDPKLAENISGVILFHETLYQKADDGTPFAEILKKKGIILGIKVDKGVVPLFGSEDEVTTQGLDDLAARCAQYKKDGCDFAKWRCVLKIGKNTPSYQSILENANVLARYASICQSQRIVPIVEPEVLPDGDHDLDRAQKVTETVLAAVYKALSDHHVYLEGTLLKPNMVTAGQSAKKNTPEEIALATVQALRRTVPAAVTGVTFLSGGQSEEEATVNLSAINNVPLIRPWALTFSYGRALQASVLRAWAGKKENIAAGQNELLKRAKANGDAAQGKYVAGSAGAGSGSLFVANHAY.

Residue Thr-2 is modified to N-acetylthreonine. 2 residues coordinate substrate: Arg-56 and Lys-147. Residue Glu-188 is the Proton acceptor of the active site. The active-site Schiff-base intermediate with dihydroxyacetone-P is the Lys-230.

The protein belongs to the class I fructose-bisphosphate aldolase family. Homotetramer. Mainly expressed in the heads and partly in the thoraxes of adult flies. In terms of tissue distribution, expressed in all adult tissues. The Alpha-beta mRNA shows strong expression in the abdomens of adults. As to expression, mainly expressed in adult abdominal regions and is also expressed in lesser amounts in other parts of the body. The Beta-gamma mRNA is expressed in adult heads.

The enzyme catalyses beta-D-fructose 1,6-bisphosphate = D-glyceraldehyde 3-phosphate + dihydroxyacetone phosphate. It functions in the pathway carbohydrate degradation; glycolysis; D-glyceraldehyde 3-phosphate and glycerone phosphate from D-glucose: step 4/4. Its function is as follows. Enzyme of the glycolytic pathway. Glycolysis is essential in glial cells but not in neurons; neurons rely on the citric acid cycle for their energy needs, and on lactate and alanine secreted into the hemolymph by glial cells to fuel it. May take part in developmental stage-specific or tissue -specific sugar-phosphate metabolisms. Protein acts on two substrates fructose 1,6-bisphosphate and fructose 1-phosphate (like other class I aldolases). The polypeptide is Fructose-bisphosphate aldolase (Drosophila melanogaster (Fruit fly)).